The following is a 434-amino-acid chain: Enolase (434 aa).

Position 168 (glutamine 168) interacts with (2R)-2-phosphoglycerate. Glutamate 210 (proton donor) is an active-site residue. Aspartate 247, glutamate 292, and aspartate 319 together coordinate Mg(2+). The (2R)-2-phosphoglycerate site is built by lysine 344, arginine 373, serine 374, and lysine 395. Lysine 344 (proton acceptor) is an active-site residue.

The protein belongs to the enolase family. Mg(2+) is required as a cofactor.

The protein localises to the cytoplasm. Its subcellular location is the secreted. The protein resides in the cell surface. It catalyses the reaction (2R)-2-phosphoglycerate = phosphoenolpyruvate + H2O. It participates in carbohydrate degradation; glycolysis; pyruvate from D-glyceraldehyde 3-phosphate: step 4/5. Its function is as follows. Catalyzes the reversible conversion of 2-phosphoglycerate (2-PG) into phosphoenolpyruvate (PEP). It is essential for the degradation of carbohydrates via glycolysis. In Endomicrobium trichonymphae, this protein is Enolase.